A 329-amino-acid chain; its full sequence is Probable nicotianamine synthase 4 (329 aa).

This sequence belongs to the nicotianamine synthase (NAS)-like family.

It catalyses the reaction 3 S-adenosyl-L-methionine = nicotianamine + 3 S-methyl-5'-thioadenosine + 3 H(+). In terms of biological role, synthesizes nicotianamine, a polyamine that is the first intermediate in the synthesis of the phytosiderophores of the mugineic acid type found in gramineae which serves as a sensor for the physiological iron status within the plant, and/or might be involved in the transport of iron. In Hordeum vulgare (Barley), this protein is Probable nicotianamine synthase 4 (NAS4).